Reading from the N-terminus, the 276-residue chain is NH(3)-dependent NAD(+) synthetase (276 aa).

46–53 (GISGGQDS) is a binding site for ATP. Aspartate 52 is a Mg(2+) binding site. A deamido-NAD(+)-binding site is contributed by arginine 140. Threonine 160 contacts ATP. Glutamate 165 contributes to the Mg(2+) binding site. Residues lysine 173 and aspartate 180 each coordinate deamido-NAD(+). ATP is bound by residues lysine 189 and threonine 211. 260 to 261 (HK) lines the deamido-NAD(+) pocket.

The protein belongs to the NAD synthetase family. As to quaternary structure, homodimer.

The catalysed reaction is deamido-NAD(+) + NH4(+) + ATP = AMP + diphosphate + NAD(+) + H(+). The protein operates within cofactor biosynthesis; NAD(+) biosynthesis; NAD(+) from deamido-NAD(+) (ammonia route): step 1/1. Functionally, catalyzes the ATP-dependent amidation of deamido-NAD to form NAD. Uses ammonia as a nitrogen source. This chain is NH(3)-dependent NAD(+) synthetase, found in Citrobacter koseri (strain ATCC BAA-895 / CDC 4225-83 / SGSC4696).